Here is a 317-residue protein sequence, read N- to C-terminus: D-aminoacyl-tRNA deacylase (317 aa).

The protein belongs to the DtdA deacylase family. It depends on Zn(2+) as a cofactor. Ubiquitous.

The protein localises to the nucleus. It localises to the cytoplasm. The enzyme catalyses a D-aminoacyl-tRNA + H2O = a tRNA + a D-alpha-amino acid + H(+). It carries out the reaction glycyl-tRNA(Ala) + H2O = tRNA(Ala) + glycine + H(+). Functionally, hydrolyzes D-aminoacyl-tRNA into D-amino acid and free tRNA. Broad specificity toward the amino acid, but strict specificity toward the D-isomer. Seems to be required for ethanol tolerance. In Arabidopsis thaliana (Mouse-ear cress), this protein is D-aminoacyl-tRNA deacylase (GEK1).